Here is a 1014-residue protein sequence, read N- to C-terminus: Pre-mRNA-processing ATP-dependent RNA helicase prp11 (1014 aa).

Basic residues predominate over residues 1 to 11 (MSRRTRSRSPP). The tract at residues 1 to 149 (MSRRTRSRSP…SRFDRTERVG (149 aa)) is disordered. 2 stretches are compositionally biased toward basic and acidic residues: residues 15 to 87 (YNRE…EYAR) and 106 to 121 (RHAE…KSDE). Residues 418 to 446 (TSWSQCGLSAQTISVINSLGYEKPTSIQA) carry the Q motif motif. Positions 449-627 (IPAITSGRDV…RKVLKKPVEI (179 aa)) constitute a Helicase ATP-binding domain. Position 462 to 469 (462 to 469 (AKTGSGKT)) interacts with ATP. Residues 575-578 (DEAD) carry the DEAD box motif. The Helicase C-terminal domain occupies 638-802 (EVEQIVEVRP…PVPKELQTLA (165 aa)). The disordered stretch occupies residues 815 to 875 (KAAGGGFGGK…PEKSTGDPTL (61 aa)). Basic and acidic residues-rich tracts occupy residues 827-838 (SRLDETRNAERK) and 855-875 (AEAK…DPTL).

The protein belongs to the DEAD box helicase family. DDX46/PRP5 subfamily.

The protein resides in the nucleus. It carries out the reaction ATP + H2O = ADP + phosphate + H(+). Functionally, ATP-dependent RNA helicase involved in pre-spliceosome/complex A assembly and mRNA splicing. Bridges U1 and U2 snRNPs during pre-spliceosome assembly and enables stable U2 snRNP association with intron RNA. Through its helicase activity probably catalyzes an ATP-dependent conformational change of U2 snRNP. This is Pre-mRNA-processing ATP-dependent RNA helicase prp11 (prp11) from Schizosaccharomyces pombe (strain 972 / ATCC 24843) (Fission yeast).